The primary structure comprises 307 residues: uncharacterized protein (307 aa).

Residues 54–307 (RHYLSTSMRV…KALPVDFFRE (254 aa)) enclose the EAL domain. Transmembrane regions (helical) follow at residues 158-178 (PGFL…AHAL) and 203-223 (ALGV…LAYL).

The protein resides in the cell membrane. This is an uncharacterized protein from Mycobacterium tuberculosis (strain CDC 1551 / Oshkosh).